Consider the following 122-residue polypeptide: Large ribosomal subunit protein uL14c (122 aa).

It belongs to the universal ribosomal protein uL14 family. In terms of assembly, part of the 50S ribosomal subunit.

It localises to the plastid. It is found in the chloroplast. In terms of biological role, binds to 23S rRNA. The chain is Large ribosomal subunit protein uL14c from Porphyra purpurea (Red seaweed).